Reading from the N-terminus, the 148-residue chain is Photosystem I reaction center subunit XI (148 aa).

The next 3 membrane-spanning stretches (helical) occupy residues 48–68 (LEIGLAHGYFLIGPFAQLGPL), 73–93 (IGLLAGFLSTIGLILILTLGL), and 122–142 (GGFFVGACGSAGFAFICLSSI).

It belongs to the PsaL family.

The protein localises to the plastid. It is found in the chloroplast thylakoid membrane. The chain is Photosystem I reaction center subunit XI from Thalassiosira pseudonana (Marine diatom).